The sequence spans 239 residues: Aspartate/glutamate leucyltransferase (239 aa).

The protein belongs to the R-transferase family. Bpt subfamily.

The protein localises to the cytoplasm. The catalysed reaction is N-terminal L-glutamyl-[protein] + L-leucyl-tRNA(Leu) = N-terminal L-leucyl-L-glutamyl-[protein] + tRNA(Leu) + H(+). It carries out the reaction N-terminal L-aspartyl-[protein] + L-leucyl-tRNA(Leu) = N-terminal L-leucyl-L-aspartyl-[protein] + tRNA(Leu) + H(+). Functions in the N-end rule pathway of protein degradation where it conjugates Leu from its aminoacyl-tRNA to the N-termini of proteins containing an N-terminal aspartate or glutamate. The protein is Aspartate/glutamate leucyltransferase of Campylobacter jejuni subsp. jejuni serotype O:6 (strain 81116 / NCTC 11828).